Here is a 153-residue protein sequence, read N- to C-terminus: Transcriptional repressor NrdR 3 (153 aa).

Residues 1–26 (MRCPFCGHDDTQVKDSRPTEDNSAIR) form a disordered region. The segment at 3-34 (CPFCGHDDTQVKDSRPTEDNSAIRRRRSCPEC) is a zinc-finger region. Basic and acidic residues predominate over residues 7-24 (GHDDTQVKDSRPTEDNSA). The ATP-cone domain maps to 49–139 (LVVIKKDGGR…VYRNFREAKD (91 aa)).

This sequence belongs to the NrdR family. Zn(2+) serves as cofactor.

In terms of biological role, negatively regulates transcription of bacterial ribonucleotide reductase nrd genes and operons by binding to NrdR-boxes. The sequence is that of Transcriptional repressor NrdR 3 from Paramagnetospirillum magneticum (strain ATCC 700264 / AMB-1) (Magnetospirillum magneticum).